The following is a 192-amino-acid chain: dTTP/UTP pyrophosphatase (192 aa).

The Proton acceptor role is filled by Asp70.

It belongs to the Maf family. YhdE subfamily. A divalent metal cation is required as a cofactor.

The protein localises to the cytoplasm. It carries out the reaction dTTP + H2O = dTMP + diphosphate + H(+). The enzyme catalyses UTP + H2O = UMP + diphosphate + H(+). Functionally, nucleoside triphosphate pyrophosphatase that hydrolyzes dTTP and UTP. May have a dual role in cell division arrest and in preventing the incorporation of modified nucleotides into cellular nucleic acids. This chain is dTTP/UTP pyrophosphatase, found in Clostridium perfringens (strain SM101 / Type A).